The sequence spans 312 residues: Plasminogen activator (312 aa).

Positions 1-20 (MKKSSIVATIITILSGSANA) are cleaved as a signal peptide. Over 21–31 (ASSQLIPNISP) the chain is Periplasmic. A beta stranded transmembrane segment spans residues 32-40 (DSFTVAAST). Residues 41–70 (GMLSGKSHEMLYDAETGRKISQLDWKIKNV) are Extracellular-facing. Residues 71–80 (AILKGDISWD) traverse the membrane as a beta stranded segment. Over 81-84 (PYSF) the chain is Periplasmic. Residues 85 to 94 (LTLNARGWTS) form a beta stranded membrane-spanning segment. Topologically, residues 95 to 131 (LASGSGNMDDYDWMNENQSEWTDHSSHPATNVNHANE) are extracellular. Active-site residues include aspartate 104 and aspartate 106. The chain crosses the membrane as a beta stranded span at residues 132–140 (YDLNVKGWL). Topologically, residues 141–145 (LQDEN) are periplasmic. The beta stranded transmembrane segment at 146-154 (YKAGITAGY) threads the bilayer. The Extracellular portion of the chain corresponds to 155 to 194 (QETRFSWTATGGSYSYNNGAYTGNFPKGVRVIGYNQRFSM). Residues 195–204 (PYIGLAGQYR) traverse the membrane as a beta stranded segment. At 205-207 (IND) the chain is on the periplasmic side. Residues 208–216 (FELNALFKF) traverse the membrane as a beta stranded segment. The Extracellular segment spans residues 217 to 244 (SDWVRAHDNDEHYMRDLTFREKTSGSRY). Residues aspartate 226 and histidine 228 contribute to the active site. The beta stranded transmembrane segment at 245-255 (YGTVINAGYYV) threads the bilayer. Over 256 to 258 (TPN) the chain is Periplasmic. The chain crosses the membrane as a beta stranded span at residues 259–267 (AKVFAEFTY). The Extracellular portion of the chain corresponds to 268 to 301 (SKYDEGKGGTQTIDKNSGDSVSIGGDAAGISNKN). A beta stranded transmembrane segment spans residues 302–312 (YTVTAGLQYRF).

This sequence belongs to the peptidase A26 family.

The protein localises to the cell outer membrane. The enzyme catalyses Converts human Glu-plasminogen to plasmin by cleaving the 560-Arg-|-Val-561 peptide bond that is also hydrolyzed by the mammalian u-plasminogen activator and t-plasminogen activator. Also cleaves arginyl bonds in other proteins.. Requires bacterial lipopolysaccharide (LPS) for activation; addition of LPS to inactive protein reactivates it. In the absence of LPS the active site groove is slightly narrower, and peptide substrate binds deep within the active site groove, displacing the nucleophilic water molecule. In the mammalian host activates (cleaves) plasminogen to generate the serine protease plasmin. Plasmin degrades fibrin clots (fibrinolysis) and facilitates bacterial cell migration, enabling rapid dissemination of bacteria from the initial site of infection. Cleaves host plasminogen to generate plasmin and probably also has autocatalytic activity. Fibrinolytic activity prevails at 37 degrees Celsius whereas coagulase expression predominates at lower temperatures (28 degrees Celsius). Cleaves plasminogen; plasminogen cleavage is much higher than coagulase activity. The chain is Plasminogen activator from Yersinia pestis.